We begin with the raw amino-acid sequence, 3289 residues long: tRNA nuclease CdiA (3289 aa).

Residues 1-32 form the signal peptide; it reads MHQPPVRFTYRLLSYLISTIIAGQPLLPAVGA. A two-partner system transport domain (TPS) region spans residues 36 to 322; the sequence is PQNGAGMDKA…AGGNLSVSSR (287 aa). The FHA-1 stretch occupies residues 351 to 1398; that stretch reads EKLTAGRDVT…IVVRTGHLLN (1048 aa). Residues 595–615 are disordered; it reads AVNASEKLTHSGKSSAPSLSL. The segment at 1399–1689 is receptor binding domain (RBD); that stretch reads QREGFSATTT…LTGQTGISDD (291 aa). The segment at 1690-1874 is YP domain; that stretch reads WPLPSGNNGY…LSPEDITLHN (185 aa). The periplasmic FHA-1 repeat (pFR) stretch occupies residues 1875 to 1935; the sequence is GSVISGNNVQ…DLSAIGDISN (61 aa). Residues 1979–2653 form an FHA-2 region; the sequence is TDTGPVATIK…TSKYDSKQTS (675 aa). The span at 2097 to 2113 shows a compositional bias: basic and acidic residues; the sequence is RESKNSRNGRSESHESH. Disordered regions lie at residues 2097-2116, 2332-2356, and 2466-2513; these read RESK…HAAV, GSSK…TIGS, and TGDP…TGKN. Composition is skewed to polar residues over residues 2344 to 2356 and 2472 to 2507; these read GTTQ…TIGS and TGVS…NLSV. A pretoxin (PT) domain region spans residues 2992–3034; the sequence is SDLSEEQKQTISTLATVSAGLAGGLTGNSTASAAVGAQSGKNA. A VENN CT cleavage motif motif is present at residues 3035-3038; it reads VENN. The segment at 3035–3289 is C-terminal effector domain (CT); has tRNase activity; that stretch reads VENNYLSVSE…VGHIQPVKVK (255 aa). Residues 3039–3197 are inner membrane translocation domain (IMTD), targets protein to PtsG; that stretch reads YLSVSEKTEL…PLIGQAASNK (159 aa).

It in the N-terminal section; belongs to the CdiA toxin family. In terms of assembly, forms a contact-dependent growth inhibition complex of CdiA-CT-NC101, CdiI-NC101 and EF-Tu; the complex is a dimer of heterotrimers. Stable CdiA-CT-NC101, EF-Tu complexes are not detected, nor are complexes with EF-Ts.

It localises to the secreted. It is found in the target cell. The protein localises to the target cell cytoplasm. Toxic component of a toxin-immunity protein module, which functions as a cellular contact-dependent growth inhibition (CDI) system. CDI modules allow bacteria to communicate with and inhibit the growth of closely related neighboring bacteria in a contact-dependent fashion (target cell counts decrease about 10,0000-fold for this system). CdiA toxicity is neutralized by its cognate immunity protein CdiI-NC101, but not by CdiI from other bacteria. The C-terminal domain (CT) cleaves tRNA endonucleolytically at the 5' side of guanine discriminator nucleotide sites (removes the last 4 nucleotides of the tRNA acceptor arm when the first nucleotide to be removed is G). Requires EF-Ts (tsf) for toxic function of the CT domain in vivo. In vitro the CT tRNase activity requires both EF-Tu (tufA) and EF-Ts. EF-Ts probably increases steady-state GTP-EF-Tu-aa-tRNA substrate levels. The CT domain is thought to remodel this same complex to displace the 3'-end of the aa-tRNA and allow it to enter into the toxin active site. The CT domain gains access to the cytoplasm of target cells by using integral inner membrane protein PTS system glucose-specific EIICB component (ptsG). Functionally, the CdiA protein is thought to be exported from the cell through the central lumen of CdiB, the other half of its two-partner system (TPS). The TPS domain probably remains associated with CdiB while the FHA-1 domain forms an extended filament with the receptor-binding domain (RBD) at its extremity; in the secretion arrested state the C-terminus of the RBD and YP domains form a hairpin-like structure as the FHA-2, PT and CT domains are periplasmic. The YP domain is probably responsible for this arrest at the point where it re-enters the host cell periplasm. Upon binding to a target cell outer membrane receptor a signal is transmitted to activate secretion. The filament elongates slightly, the rest of CdiA is secreted and the FHA-2 domain becomes stably associated with the target cell's outer membrane where it facilitates entry of the toxic CT domain into the target cell periplasm. From there the toxic CT domain is cleaved and gains access to the target cell cytoplasm via an inner membrane protein (PtsG for this CDI). The polypeptide is tRNA nuclease CdiA (Escherichia coli (strain NC101)).